Consider the following 451-residue polypeptide: Lipase member H (451 aa).

Residues 1–16 (MLRLCFLLSFMCLVKS) form the signal peptide. A glycan (N-linked (GlcNAc...) asparagine) is linked at N66. Catalysis depends on S154, which acts as the Nucleophile. The active-site Charge relay system is the D178. A disulfide bond links C233 and C246. H248 serves as the catalytic Charge relay system. 3 cysteine pairs are disulfide-bonded: C270–C281, C284–C292, and C427–C446.

This sequence belongs to the AB hydrolase superfamily. Lipase family. As to quaternary structure, interacts with TTMP/C3orf52.

Its subcellular location is the secreted. It localises to the cell membrane. It carries out the reaction 1-hexadecanoyl-2-(9Z-octadecenoyl)-sn-glycero-3-phosphate + H2O = 2-(9Z-octadecenoyl)-sn-glycero-3-phosphate + hexadecanoate + H(+). In terms of biological role, hydrolyzes specifically phosphatidic acid (PA) to produce 2-acyl lysophosphatidic acid (LPA; a potent bioactive lipid mediator) and fatty acid. Does not hydrolyze other phospholipids, like phosphatidylserine (PS), phosphatidylcholine (PC) and phosphatidylethanolamine (PE) or triacylglycerol (TG). The chain is Lipase member H (Liph) from Rattus norvegicus (Rat).